Reading from the N-terminus, the 71-residue chain is Protein KleB (71 aa).

The H-T-H motif DNA-binding region spans 9 to 28 (VTTNCRRCGKSISTLSRSLI).

In Escherichia coli, this protein is Protein KleB (kleB).